The chain runs to 118 residues: Small ribosomal subunit protein uS13 (118 aa).

A disordered region spans residues 94-118 (SLPVHGQRTKTNARTCKGPRKPIKK).

This sequence belongs to the universal ribosomal protein uS13 family. Part of the 30S ribosomal subunit. Forms a loose heterodimer with protein S19. Forms two bridges to the 50S subunit in the 70S ribosome.

Functionally, located at the top of the head of the 30S subunit, it contacts several helices of the 16S rRNA. In the 70S ribosome it contacts the 23S rRNA (bridge B1a) and protein L5 of the 50S subunit (bridge B1b), connecting the 2 subunits; these bridges are implicated in subunit movement. Contacts the tRNAs in the A and P-sites. This is Small ribosomal subunit protein uS13 from Buchnera aphidicola subsp. Acyrthosiphon pisum (strain 5A).